Consider the following 1025-residue polypeptide: Exportin-T (1025 aa).

It belongs to the exportin family.

Its subcellular location is the nucleus. It localises to the cytoplasm. TRNA nucleus export receptor which facilitates tRNA translocation across the nuclear pore complex. Involved in pre-tRNA splicing, probably by affecting the interaction of pre-tRNA with splicing endonuclease. This Yarrowia lipolytica (strain CLIB 122 / E 150) (Yeast) protein is Exportin-T (LOS1).